Reading from the N-terminus, the 63-residue chain is Beta-defensin 3 (63 aa).

An N-terminal signal peptide occupies residues 1–20 (MRIHYLLFAFLLVLLSPPAA). Positions 21–22 (FS) are excised as a propeptide. Intrachain disulfides connect C31/C59, C38/C52, and C42/C60.

Belongs to the beta-defensin family. LAP/TAP subfamily. As to expression, highest expression in salivary glands, epididymis, ovary and pancreas and to a lesser extent in lung, liver and brain. Low or no expression in skeletal muscle and tongue.

Its subcellular location is the secreted. Antimicrobial activity against Gram-negative bacteria E.coli and P.aeruginosa. This Mus musculus (Mouse) protein is Beta-defensin 3 (Defb3).